The chain runs to 363 residues: TBC1 domain family member whacked (363 aa).

Positions 77-265 (GIPKSVRPKA…RVWDCFLAEG (189 aa)) constitute a Rab-GAP TBC domain. The segment at 335-363 (KARRAKQKAQQEAESSGSGNGHRRNMPTL) is disordered.

The protein resides in the apical cell membrane. The protein localises to the cytoplasmic vesicle. It is found in the cell projection. It localises to the filopodium. Essential for ensuring the polarized growth of tracheal seamless tubes. During seamless tube morphogenesis, likely to act as a GTPase-activating protein (GAP) for Rab35 to regulate vesicle trafficking from the recycling endosomes to the lumenal apical membrane to ensure the polarized dynein motor complex-dependent growth of seamless tubes along the proximodistal axis in tracheal terminal cells. When the terminal branch lumen is growing, Rab35-GTP is active and likely directs the transport of apical membrane vesicles from the soma to the distal tip of elongating terminal cell branches thus providing a continuous supply of apical membrane components as the lumen grows. Whereas when Rab35-GDP is inactivated, presumably by this GAP, apical membrane vesicles are transported to a central location adjacent to the terminal cell nucleus. In Drosophila melanogaster (Fruit fly), this protein is TBC1 domain family member whacked.